The primary structure comprises 133 residues: Protein archease (133 aa).

Ca(2+)-binding residues include Asp11, Asp132, and Leu133.

The protein belongs to the archease family.

Activates the tRNA-splicing ligase complex by facilitating the enzymatic turnover of catalytic subunit RtcB. Acts by promoting the guanylylation of RtcB, a key intermediate step in tRNA ligation. Can also alter the NTP specificity of RtcB such that ATP, dGTP or ITP is used efficiently. This is Protein archease from Thermoplasma volcanium (strain ATCC 51530 / DSM 4299 / JCM 9571 / NBRC 15438 / GSS1).